The chain runs to 637 residues: MSPRIQQLAAVLLAAVVVVAAARDEPAAAKNYQTQWDTVMSILNCKSDSLIPSYICSVISKSRWGWASDDPNDDEYTPPDHPLPAPAAGRRRWPVMTSLNLTKYVDSLPRIAKIRGYGIRHGRPVPIKLTIGMYSKTWQFHRDMPPTPVFVYGQSLQTATFPGPTIVARQGVPLAVEWQNHLPDAHILPWDPKVPTAIPKKGGVPTVVHLHGGAHPPEFDGHAFAWFTRDFAENGSTWTRKTYTYPNVQAPGNLWYHDHALGLTRVSLLAGLLAAYVIEKPELEDPMNLPCGDHDLHLVIADREFYTNGSISIDREWKPEYFGLVITVNGKAWPYLSVQRRRYRLRILNASNARYFNVTLSNGALPFTVIGSDSSYLSRPVTVSNLVLSPAEIFDVIVDFSRLPAAMTEIEMLNTAPYPFPNGPNVTDPNLDGKVMLFKVAGKGKVDDMPDKSKVPEHGVPYASVAALPPPTTTRYIVLYENQTAPGNLYINGLRLEDPVTETPKSGTTELWQVINLTGDNHPLHLHIATFQAIKMTKIEGFQVFKDCMIKNNNTATCNLDQHAVGPVVPVPEEEKTWKNAVKIPPEFMTSVVVAFRLVEANQPYPFDATTEPGFVYHCHILDHEDNAMIRPLKLLP.

Positions 1-21 are cleaved as a signal peptide; the sequence is MSPRIQQLAAVLLAAVVVVAA. Asn100 carries an N-linked (GlcNAc...) asparagine glycan. Cu cation contacts are provided by His209 and His211. The N-linked (GlcNAc...) asparagine glycan is linked to Asn234. 2 residues coordinate Cu cation: His257 and His259. N-linked (GlcNAc...) asparagine glycans are attached at residues Asn308, Asn349, Asn357, Asn425, Asn482, and Asn516. Positions 334 to 406 constitute a Plastocyanin-like domain; that stretch reads PYLSVQRRRY…IVDFSRLPAA (73 aa). Positions 522, 525, and 527 each coordinate Cu cation. Residue Asn553 is glycosylated (N-linked (GlcNAc...) asparagine). 5 residues coordinate Cu cation: His618, Cys619, His620, His624, and Met629.

It belongs to the multicopper oxidase family. The cofactor is Cu cation. Highly expressed in roots and basal stems.

It is found in the endoplasmic reticulum membrane. Multicopper oxidase that may play a role in the maintenance of inorganic phosphate homeostasis. The sequence is that of Multicopper oxidase LPR1 homolog 5 from Oryza sativa subsp. japonica (Rice).